Reading from the N-terminus, the 238-residue chain is Probable transcriptional regulatory protein M6_Spy0297 (238 aa).

Belongs to the TACO1 family. YeeN subfamily.

It is found in the cytoplasm. In Streptococcus pyogenes serotype M6 (strain ATCC BAA-946 / MGAS10394), this protein is Probable transcriptional regulatory protein M6_Spy0297.